A 1211-amino-acid chain; its full sequence is Homeodomain-interacting protein kinase 1 (1211 aa).

A Glycyl lysine isopeptide (Lys-Gly) (interchain with G-Cter in SUMO); alternate cross-link involves residue lysine 25. A Glycyl lysine isopeptide (Lys-Gly) (interchain with G-Cter in SUMO2); alternate cross-link involves residue lysine 25. Residues lysine 120 and lysine 124 each participate in a glycyl lysine isopeptide (Lys-Gly) (interchain with G-Cter in SUMO2) cross-link. A Protein kinase domain is found at 190 to 518; sequence YEVLEFLGRG…PLKTLNHQFV (329 aa). Residues 196–204 and lysine 219 contribute to the ATP site; that span reads LGRGTFGQV. Residue aspartate 315 is the Proton acceptor of the active site. Positions 835 to 856 are disordered; that stretch reads QQQSSSLPSRKNKQSAPVSSTS. Residues 844-847 carry the Nuclear localization signal 1 (NLS1) motif; that stretch reads RKNK. Serine 872 is modified (phosphoserine). Residues 885–1094 are interaction with TP53; it reads PVQDQHQPII…FQHGSPLHST (210 aa). A required for localization to nuclear speckles region spans residues 891–998; the sequence is QPIIIPDTPS…PLKTQLGDCT (108 aa). The tract at residues 902–926 is SUMO interaction motifs (SIM); required for nuclear localization and kinase activity; the sequence is PVSVITIRSDTDEEEDNKFKPSSSS. A Glycyl lysine isopeptide (Lys-Gly) (interchain with G-Cter in SUMO2) cross-link involves residue lysine 991. Disordered regions lie at residues 1002 to 1023, 1047 to 1070, and 1085 to 1105; these read QASGLLSSSKTKPVASVSGQSS, LSQNQQSSSASTSQERSSNPAPRR, and FQHGSPLHSTGHPHLAPAPAH. 2 stretches are compositionally biased toward low complexity: residues 1048–1064 and 1096–1105; these read SQNQQSSSASTSQERSS and HPHLAPAPAH. Serine 1201 bears the Phosphoserine mark. Residue lysine 1204 forms a Glycyl lysine isopeptide (Lys-Gly) (interchain with G-Cter in SUMO) linkage.

Belongs to the protein kinase superfamily. CMGC Ser/Thr protein kinase family. HIPK subfamily. In terms of assembly, interacts with Nkx1-2, Nkx2-5, MYB, PARK7, DAXX and p53/TP53. Part of a cytoplasmic complex made of HIPK1, DAB2IP and MAP3K5 in response to TNF. This complex formation promotes MAP3K5-JNK activation and subsequent apoptosis. Phosphorylated and activated by JNK1. Autophosphorylated. Post-translationally, sumoylated. When conjugated it is directed to nuclear speckles. SENP1-mediated desumoylation is mediated by TNF in response to stress stimuli, triggering transient translocation from nucleus to cytoplasm.

Its subcellular location is the nucleus. It is found in the cytoplasm. It localises to the nucleus speckle. It catalyses the reaction L-seryl-[protein] + ATP = O-phospho-L-seryl-[protein] + ADP + H(+). The enzyme catalyses L-threonyl-[protein] + ATP = O-phospho-L-threonyl-[protein] + ADP + H(+). In terms of biological role, serine/threonine-protein kinase involved in transcription regulation and TNF-mediated cellular apoptosis. Plays a role as a corepressor for homeodomain transcription factors. Phosphorylates DAXX and MYB. Phosphorylates DAXX in response to stress, and mediates its translocation from the nucleus to the cytoplasm. Inactivates MYB transcription factor activity by phosphorylation. Prevents MAP3K5-JNK activation in the absence of TNF. TNF triggers its translocation to the cytoplasm in response to stress stimuli, thus activating nuclear MAP3K5-JNK by derepression and promoting apoptosis. May be involved in anti-oxidative stress responses. Involved in the regulation of eye size, lens formation and retinal lamination during late embryogenesis. Promotes angiogenesis and to be involved in erythroid differentiation. May be involved in malignant squamous cell tumor formation. Phosphorylates PAGE4 at 'Thr-51' which is critical for the ability of PAGE4 to potentiate the transcriptional activator activity of JUN. The sequence is that of Homeodomain-interacting protein kinase 1 from Rattus norvegicus (Rat).